A 225-amino-acid chain; its full sequence is DNA repair and recombination protein RadB (225 aa).

This sequence belongs to the eukaryotic RecA-like protein family. RadB subfamily.

Involved in DNA repair and in homologous recombination. May regulate the cleavage reactions of the branch-structured DNA. Has a very weak ATPase activity that is not stimulated by DNA. Binds DNA but does not promote DNA strands exchange. The protein is DNA repair and recombination protein RadB of Methanococcoides burtonii (strain DSM 6242 / NBRC 107633 / OCM 468 / ACE-M).